The primary structure comprises 144 residues: Transcription antitermination protein NusB (144 aa).

It belongs to the NusB family.

Its function is as follows. Involved in transcription antitermination. Required for transcription of ribosomal RNA (rRNA) genes. Binds specifically to the boxA antiterminator sequence of the ribosomal RNA (rrn) operons. The polypeptide is Transcription antitermination protein NusB (Haemophilus influenzae (strain PittGG)).